Here is a 74-residue protein sequence, read N- to C-terminus: Cecropin-P4 (74 aa).

Positions 1–13 (MFLMYLLVQTTES) are cleaved as a signal peptide. Positions 45 to 74 (HRRSVAHQEEASLHVKTDELPSPDTVREQL) are cleaved as a propeptide — removed in mature form. The tract at residues 51–74 (HQEEASLHVKTDELPSPDTVREQL) is disordered.

The protein belongs to the cecropin family. As to expression, expressed in the body wall, intestine, uterus and ovary.

It is found in the secreted. Functionally, has antibacterial activity against several Gram-positive and Gram-negative bacteria. Is weakly active against yeasts. Acts by a nonpore mechanism. This Ascaris suum (Pig roundworm) protein is Cecropin-P4 (ASCEC-4).